The primary structure comprises 113 residues: Large ribosomal subunit protein bL19 (113 aa).

Belongs to the bacterial ribosomal protein bL19 family.

Its function is as follows. This protein is located at the 30S-50S ribosomal subunit interface and may play a role in the structure and function of the aminoacyl-tRNA binding site. This Mycobacterium leprae (strain Br4923) protein is Large ribosomal subunit protein bL19.